A 122-amino-acid chain; its full sequence is Basic phospholipase A2 PL-X (122 aa).

7 disulfide bridges follow: Cys-26–Cys-115, Cys-28–Cys-44, Cys-43–Cys-95, Cys-49–Cys-122, Cys-50–Cys-88, Cys-57–Cys-81, and Cys-75–Cys-86. Residues Tyr-27, Gly-29, and Gly-31 each coordinate Ca(2+). The active site involves His-47. Asp-48 is a binding site for Ca(2+). Asp-89 is an active-site residue.

The protein belongs to the phospholipase A2 family. Group II subfamily. D49 sub-subfamily. Requires Ca(2+) as cofactor. As to expression, expressed by the venom gland.

The protein resides in the secreted. The enzyme catalyses a 1,2-diacyl-sn-glycero-3-phosphocholine + H2O = a 1-acyl-sn-glycero-3-phosphocholine + a fatty acid + H(+). Functionally, PLA2 catalyzes the calcium-dependent hydrolysis of the 2-acyl groups in 3-sn-phosphoglycerides. This is Basic phospholipase A2 PL-X from Protobothrops flavoviridis (Habu).